The sequence spans 305 residues: Tyrosine recombinase XerC (305 aa).

The region spanning 4–95 is the Core-binding (CB) domain; it reads TSIQELIDKW…AVKNFYRFLE (92 aa). The Tyr recombinase domain occupies 116–298; the sequence is LLPKALSEDD…SIKHLEAVYT (183 aa). Catalysis depends on residues Arg-159, Lys-182, His-250, Arg-253, and His-276. Tyr-285 functions as the O-(3'-phospho-DNA)-tyrosine intermediate in the catalytic mechanism.

It belongs to the 'phage' integrase family. XerC subfamily. In terms of assembly, forms a cyclic heterotetrameric complex composed of two molecules of XerC and two molecules of XerD.

It localises to the cytoplasm. In terms of biological role, site-specific tyrosine recombinase, which acts by catalyzing the cutting and rejoining of the recombining DNA molecules. The XerC-XerD complex is essential to convert dimers of the bacterial chromosome into monomers to permit their segregation at cell division. It also contributes to the segregational stability of plasmids. The protein is Tyrosine recombinase XerC of Rickettsia felis (strain ATCC VR-1525 / URRWXCal2) (Rickettsia azadi).